The sequence spans 329 residues: Lipoyl synthase (329 aa).

The [4Fe-4S] cluster site is built by Cys-72, Cys-77, Cys-83, Cys-98, Cys-102, Cys-105, and Ser-313. Positions 83 to 303 (CWSHGTATIM…QIGLKKGFFE (221 aa)) constitute a Radical SAM core domain.

The protein belongs to the radical SAM superfamily. Lipoyl synthase family. It depends on [4Fe-4S] cluster as a cofactor.

The protein localises to the cytoplasm. It catalyses the reaction [[Fe-S] cluster scaffold protein carrying a second [4Fe-4S](2+) cluster] + N(6)-octanoyl-L-lysyl-[protein] + 2 oxidized [2Fe-2S]-[ferredoxin] + 2 S-adenosyl-L-methionine + 4 H(+) = [[Fe-S] cluster scaffold protein] + N(6)-[(R)-dihydrolipoyl]-L-lysyl-[protein] + 4 Fe(3+) + 2 hydrogen sulfide + 2 5'-deoxyadenosine + 2 L-methionine + 2 reduced [2Fe-2S]-[ferredoxin]. The protein operates within protein modification; protein lipoylation via endogenous pathway; protein N(6)-(lipoyl)lysine from octanoyl-[acyl-carrier-protein]: step 2/2. In terms of biological role, catalyzes the radical-mediated insertion of two sulfur atoms into the C-6 and C-8 positions of the octanoyl moiety bound to the lipoyl domains of lipoate-dependent enzymes, thereby converting the octanoylated domains into lipoylated derivatives. The chain is Lipoyl synthase from Legionella pneumophila (strain Corby).